The following is a 275-amino-acid chain: Phosphonoacetaldehyde hydrolase (275 aa).

The active-site Nucleophile is D15. Residues D15 and A17 each contribute to the Mg(2+) site. K56 functions as the Schiff-base intermediate with substrate in the catalytic mechanism. Mg(2+) is bound at residue D189.

Belongs to the HAD-like hydrolase superfamily. PhnX family. In terms of assembly, homodimer. Mg(2+) serves as cofactor.

The catalysed reaction is phosphonoacetaldehyde + H2O = acetaldehyde + phosphate + H(+). Inhibited by phosphite, moderately inhibited by phosphonic acids, the corresponding aminophosphonic acids activate the enzyme. Functionally, involved in phosphonate degradation. This is Phosphonoacetaldehyde hydrolase from Pseudomonas aeruginosa (strain ATCC 15692 / DSM 22644 / CIP 104116 / JCM 14847 / LMG 12228 / 1C / PRS 101 / PAO1).